A 129-amino-acid polypeptide reads, in one-letter code: Replication initiation control protein YabA (129 aa).

The interval 52 to 71 (LSLTDEATPEPKAETEAEHG) is disordered. Positions 60–71 (PEPKAETEAEHG) are enriched in basic and acidic residues. 4 residues coordinate Zn(2+): histidine 103, cysteine 105, cysteine 119, and cysteine 122.

It belongs to the YabA family. In terms of assembly, homotetramer. Interacts with both DnaA and DnaN, acting as a bridge between these two proteins. Zn(2+) serves as cofactor.

The protein resides in the cytoplasm. The protein localises to the nucleoid. Involved in control of chromosome replication initiation. Inhibits the cooperative binding of DnaA to the oriC region, thus negatively regulating initiation of chromosome replication. Inhibits the ability of DnaA-ATP to form a helix on DNA; does not disassemble preformed DnaA-DNA helices. Decreases the residence time of DnaA on the chromosome at its binding sites (oriC, replication forks and promoter-binding sites). Tethers DnaA to the replication machinery via the DNA polymerase beta sliding clamp subunit (dnaN). Associates with oriC and other DnaA targets on the chromosome in a DnaA-dependent manner. This is Replication initiation control protein YabA from Listeria monocytogenes serotype 4a (strain HCC23).